The sequence spans 152 residues: SKP1-like protein 10 (152 aa).

Residues 94-152 form an interaction with the F-box domain of F-box proteins region; it reads IMAANYLNIKSLLDLACQTVADMIKDNTVEHTRKFFNIENDYTHEEEEAVRRENQWGFE.

Belongs to the SKP1 family. In terms of assembly, part of a SCF (SKP1-cullin-F-box) protein ligase complex. Interacts with CPR1/CPR30. In terms of tissue distribution, expressed in young seedlings, roots, leaves, floral stems, inflorescences, and siliques.

The protein resides in the nucleus. It functions in the pathway protein modification; protein ubiquitination. Involved in ubiquitination and subsequent proteasomal degradation of target proteins. Together with CUL1, RBX1 and a F-box protein, it forms a SCF E3 ubiquitin ligase complex. The functional specificity of this complex depends on the type of F-box protein. In the SCF complex, it serves as an adapter that links the F-box protein to CUL1. This is SKP1-like protein 10 (ASK10) from Arabidopsis thaliana (Mouse-ear cress).